The following is a 238-amino-acid chain: Lytic polysaccharide monooxygenase NCU01050 (238 aa).

An N-terminal signal peptide occupies residues Met-1–Ala-15. Residue His-16 coordinates Cu(2+). Residue Glu-45 participates in O2 binding. Disulfide bonds link Cys-54/Cys-186 and Cys-156/Cys-238. An N-linked (GlcNAc...) asparagine glycan is attached at Asn-75. Residue His-99 participates in Cu(2+) binding. 2 residues coordinate O2: His-172 and Gln-181. The active-site Proton donor is the His-172. Residue Tyr-183 coordinates Cu(2+).

It belongs to the polysaccharide monooxygenase AA9 family. In terms of assembly, monomer. Cu(2+) serves as cofactor. Post-translationally, N-linked glycans containing mannose and N-acetylglucosamine.

The protein resides in the secreted. It catalyses the reaction [(1-&gt;4)-beta-D-glucosyl]n+m + reduced acceptor + O2 = 4-dehydro-beta-D-glucosyl-[(1-&gt;4)-beta-D-glucosyl]n-1 + [(1-&gt;4)-beta-D-glucosyl]m + acceptor + H2O.. The protein operates within glycan metabolism; cellulose degradation. Inhibited by increasing levels of ascorbic acid. In terms of biological role, catalyzes the oxidative cleavage of glycosidic bonds in cellulosic substrates via a copper-dependent mechanism. In the presence of an exogenous reductant ascorbic acid, degrades phosphoric acid swollen cellulose (PASC) to cello-oligosaccharides and 4-ketoaldoses, the end products oxidized at the non-reducing end. Somewhat active toward tamarind xyloglucan and konjac glucomannan, with improved activity with glucomannan in the presence of PASC. H(2)O(2) is able to substitute for O(2) in reactions with PASC, xyloglucan and glucomannan. Very weak activity on cellopentaose. No activity with birchwood xylan or ivory nut mannan. Disrupts plant cell wall polysaccharide substrates, such as recalcitrant crystalline cellulose. The protein is Lytic polysaccharide monooxygenase NCU01050 of Neurospora crassa (strain ATCC 24698 / 74-OR23-1A / CBS 708.71 / DSM 1257 / FGSC 987).